A 339-amino-acid chain; its full sequence is Methionine import ATP-binding protein MetN 2 (339 aa).

Residues 2 to 241 (ISFNNVSKVY…PKTTTTQNFV (240 aa)) enclose the ABC transporter domain. 38–45 (GFSGAGKS) lines the ATP pocket.

The protein belongs to the ABC transporter superfamily. Methionine importer (TC 3.A.1.24) family. In terms of assembly, the complex is composed of two ATP-binding proteins (MetN), two transmembrane proteins (MetI) and a solute-binding protein (MetQ).

It localises to the cell membrane. It catalyses the reaction L-methionine(out) + ATP + H2O = L-methionine(in) + ADP + phosphate + H(+). The enzyme catalyses D-methionine(out) + ATP + H2O = D-methionine(in) + ADP + phosphate + H(+). Functionally, part of the ABC transporter complex MetNIQ involved in methionine import. Responsible for energy coupling to the transport system. This Bacillus anthracis protein is Methionine import ATP-binding protein MetN 2.